The chain runs to 173 residues: Putative phosphoesterase GK0864 (173 aa).

Histidine 34 functions as the Proton donor in the catalytic mechanism. Short sequence motifs (HXTX) lie at residues 34 to 37 and 115 to 118; these read HITL and HITI. The Proton acceptor role is filled by histidine 115.

This sequence belongs to the 2H phosphoesterase superfamily. YjcG family.

The protein is Putative phosphoesterase GK0864 of Geobacillus kaustophilus (strain HTA426).